The chain runs to 383 residues: Deoxyhypusine synthase-like protein (383 aa).

It belongs to the deoxyhypusine synthase family.

This Nostoc sp. (strain PCC 7120 / SAG 25.82 / UTEX 2576) protein is Deoxyhypusine synthase-like protein.